Consider the following 611-residue polypeptide: Nuclear cap-binding protein subunit 3 (611 aa).

The segment at 1–44 is disordered; that stretch reads MAAVRGLRVSVKAGGGAEPEPMEVEEGEVEAAADRASPREVVSG. Positions 20-31 are enriched in acidic residues; it reads EPMEVEEGEVEA. The segment at 108–169 is RNA recognition motif (RRM) domain; sequence ETLYVYGVDD…LSSMPTNEKG (62 aa). A WLDD motif; essential for 7-methylguanosine-containing mRNA cap binding motif is present at residues 137–140; that stretch reads WLDD. Disordered stretches follow at residues 159 to 230, 338 to 360, 373 to 393, 423 to 568, and 583 to 611; these read NLSS…PDTL, EEPI…DDRV, RERE…EMDY, KTIR…DSVL, and RQKK…DTDS. Basic and acidic residues predominate over residues 168–179; sequence KGQRKKDGEHSS. 2 stretches are compositionally biased toward acidic residues: residues 196 to 218 and 339 to 358; these read DETE…DETE and EPIE…DEDD. Residues 423–439 show a composition bias toward polar residues; it reads KTIRNSMRSDSVGNSVK. The span at 446 to 463 shows a compositional bias: basic and acidic residues; sequence SHAEKPADVRLILEEKRQ. Residues 464–475 are compositionally biased toward low complexity; sequence STASRQQSSSGK. Basic and acidic residues-rich tracts occupy residues 501 to 511 and 544 to 556; these read SRREPLSDVHS and PKDK…KSEK. Residues 602 to 611 are compositionally biased toward low complexity; the sequence is ESSSGSDTDS.

Belongs to the NCBP3 family. As to quaternary structure, component of an alternative cap-binding complex (CBC) composed of NCBP1/CBP80 and NCBP3.

The protein localises to the nucleus. It localises to the cytoplasm. Associates with NCBP1/CBP80 to form an alternative cap-binding complex (CBC) which plays a key role in mRNA export. NCBP3 serves as adapter protein linking the capped RNAs (m7GpppG-capped RNA) to NCBP1/CBP80. Unlike the conventional CBC with NCBP2 which binds both small nuclear RNA (snRNA) and messenger (mRNA) and is involved in their export from the nucleus, the alternative CBC with NCBP3 does not bind snRNA and associates only with mRNA thereby playing a role in only mRNA export. The sequence is that of Nuclear cap-binding protein subunit 3 from Xenopus tropicalis (Western clawed frog).